We begin with the raw amino-acid sequence, 109 residues long: MSRAKGNVAEDRASLFLLENGYMIVDKNFYSRFGEIDIIAYKEEVWHFVEVKSALDYELAVQNITKSKLSKLIKTGDVYLKKNALHVDYMYDAIIVTPENIWHLENITL.

It belongs to the UPF0102 family.

This is UPF0102 protein Suden_1901 from Sulfurimonas denitrificans (strain ATCC 33889 / DSM 1251) (Thiomicrospira denitrificans (strain ATCC 33889 / DSM 1251)).